The following is a 398-amino-acid chain: Protein FAM53A (398 aa).

Positions 85 to 253 (QWQPQSPRPG…TSTPALGGRR (169 aa)) are disordered. The segment covering 103–115 (VDPSESTGSSTAP) has biased composition (polar residues). Positions 123 to 132 (SLSEPEELVR) are enriched in basic and acidic residues. Position 125 is a phosphoserine (serine 125). Low complexity-rich tracts occupy residues 176–193 (STGPTSPATPRPSSASGG) and 234–250 (TPLPWASSSPTSTPALG). A Nuclear localization signal motif is present at residues 268–276 (KRSRRKRRR). A phosphoserine mark is found at serine 301 and serine 304. The segment at 336–398 (PGCSQRGLRT…ELDLEQIENN (63 aa)) is disordered. Residues 363 to 375 (GSRRSSGDPRDGD) are compositionally biased toward basic and acidic residues.

The protein belongs to the FAM53 family.

It localises to the nucleus. Functionally, may play an important role in neural development; the dorsomedial roof of the third ventricle. This is Protein FAM53A from Homo sapiens (Human).